The following is a 311-amino-acid chain: Probable manganese-dependent inorganic pyrophosphatase (311 aa).

Residues His9, Asp13, Asp15, Asp77, His99, and Asp151 each contribute to the Mn(2+) site.

This sequence belongs to the PPase class C family. Requires Mn(2+) as cofactor.

It localises to the cytoplasm. The enzyme catalyses diphosphate + H2O = 2 phosphate + H(+). The chain is Probable manganese-dependent inorganic pyrophosphatase from Streptococcus pyogenes serotype M49 (strain NZ131).